The following is a 141-amino-acid chain: 6,7-dimethyl-8-ribityllumazine synthase (141 aa).

5-amino-6-(D-ribitylamino)uracil is bound by residues Phe11, 42-44 (ALE), and 66-68 (VVI). 71–72 (ET) is a (2S)-2-hydroxy-3-oxobutyl phosphate binding site. His74 serves as the catalytic Proton donor. Position 98 (Asn98) interacts with 5-amino-6-(D-ribitylamino)uracil. Arg112 contacts (2S)-2-hydroxy-3-oxobutyl phosphate.

It belongs to the DMRL synthase family.

The catalysed reaction is (2S)-2-hydroxy-3-oxobutyl phosphate + 5-amino-6-(D-ribitylamino)uracil = 6,7-dimethyl-8-(1-D-ribityl)lumazine + phosphate + 2 H2O + H(+). Its pathway is cofactor biosynthesis; riboflavin biosynthesis; riboflavin from 2-hydroxy-3-oxobutyl phosphate and 5-amino-6-(D-ribitylamino)uracil: step 1/2. Its function is as follows. Catalyzes the formation of 6,7-dimethyl-8-ribityllumazine by condensation of 5-amino-6-(D-ribitylamino)uracil with 3,4-dihydroxy-2-butanone 4-phosphate. This is the penultimate step in the biosynthesis of riboflavin. This Sphingopyxis alaskensis (strain DSM 13593 / LMG 18877 / RB2256) (Sphingomonas alaskensis) protein is 6,7-dimethyl-8-ribityllumazine synthase.